Consider the following 309-residue polypeptide: MSALSSENINGVYIPSALLLFGTFIVKKEFVPYAVAVTAILAGLKLFTGGNKPRKVLNPTEFQEFVLKEKIDVSHNVCIYRFALPRPTDILGLPIGQHISLAATIEGQPKEVVRSYTPISSDNEAGYFDLLVKAYPQGNISKYLTTLKIGDTMKVRGPKGAMVYTPNMCRHIGMIAGGTGITPMLQIIKAVIRNRPRNGGNDTTKLDLIFANVNPDDILLKEELDMLAAEDPDFNIYYVLNNPPQGWTGGVGFVTPEMIKEHLPAPASDVKILLCGPPPMISAMKKATESLGYTKARPVSKLEDQVFCF.

The chain crosses the membrane as a helical span at residues 30–50 (FVPYAVAVTAILAGLKLFTGG). Residues 60-165 (TEFQEFVLKE…RGPKGAMVYT (106 aa)) enclose the FAD-binding FR-type domain. FAD is bound by residues 145-160 (TTLK…GPKG) and 171-208 (HIGM…KLDL).

Belongs to the flavoprotein pyridine nucleotide cytochrome reductase family. Monomer. Component of the 2-(3-amino-3-carboxypropyl)histidine synthase complex composed of dph1, dph2, dph3 and a NADH-dependent reductase, predominantly cbr1. FAD is required as a cofactor.

The protein localises to the mitochondrion outer membrane. It carries out the reaction 2 Fe(III)-[cytochrome b5] + NADH = 2 Fe(II)-[cytochrome b5] + NAD(+) + H(+). It catalyses the reaction 2 Fe(3+)-[Dph3] + NADH = 2 Fe(2+)-[Dph3] + NAD(+) + H(+). It participates in protein modification; peptidyl-diphthamide biosynthesis. In terms of biological role, NADH-dependent reductase for dph3 and cytochrome b5. Required for the first step of diphthamide biosynthesis, a post-translational modification of histidine which occurs in elongation factor 2. Dph1 and dph2 transfer a 3-amino-3-carboxypropyl (ACP) group from S-adenosyl-L-methionine (SAM) to a histidine residue, the reaction is assisted by a reduction system comprising dph3 and a NADH-dependent reductase, predominantly cbr1. By reducing dph3, also involved in the formation of the tRNA wobble base modification mcm5s 2U (5-methoxycarbonylmethyl-2-thiouridine), mediated by the elongator complex. The cytochrome b5/NADH cytochrome b5 reductase electron transfer system supports the catalytic activity of several sterol biosynthetic enzymes. This chain is NADH-cytochrome b5 reductase 1 (cbr1), found in Aspergillus fumigatus (strain ATCC MYA-4609 / CBS 101355 / FGSC A1100 / Af293) (Neosartorya fumigata).